The chain runs to 151 residues: MNIYKPAGFWIRLGAALLDYIIVSVPLLLIYWLITGKDPNDSMFISLVVLLYSILLPMFWRGYLIGKRICGIRIVKKDGSQVSLLTMFLRVIVAGLVYCITFGLGLIASLILIAVREDKRTLHDLIAGTYVTYATPGEEELNADEEIRKSE.

Transmembrane regions (helical) follow at residues 14–34 (GAAL…YWLI), 45–65 (ISLV…GYLI), and 91–111 (VIVA…ASLI).

The protein resides in the cell membrane. This is an uncharacterized protein from Bacillus subtilis (strain 168).